The primary structure comprises 178 residues: Small ribosomal subunit protein uS4 (178 aa).

Residues 104–166 enclose the S4 RNA-binding domain; the sequence is RRLQTIVYRK…PNSPMASENH (63 aa). Residues 158-178 form a disordered region; sequence NSPMASENHPERTAAVSEENQ.

It belongs to the universal ribosomal protein uS4 family. In terms of assembly, part of the 30S ribosomal subunit. Contacts protein S5. The interaction surface between S4 and S5 is involved in control of translational fidelity.

In terms of biological role, one of the primary rRNA binding proteins, it binds directly to 16S rRNA where it nucleates assembly of the body of the 30S subunit. With S5 and S12 plays an important role in translational accuracy. This Methanococcus maripaludis (strain C5 / ATCC BAA-1333) protein is Small ribosomal subunit protein uS4.